The following is a 166-amino-acid chain: Cyclic pyranopterin monophosphate synthase (166 aa).

Substrate contacts are provided by residues 75-77 and 113-114; these read LCH and ME. D128 is an active-site residue.

This sequence belongs to the MoaC family. As to quaternary structure, homohexamer; trimer of dimers.

The enzyme catalyses (8S)-3',8-cyclo-7,8-dihydroguanosine 5'-triphosphate = cyclic pyranopterin phosphate + diphosphate. Its pathway is cofactor biosynthesis; molybdopterin biosynthesis. In terms of biological role, catalyzes the conversion of (8S)-3',8-cyclo-7,8-dihydroguanosine 5'-triphosphate to cyclic pyranopterin monophosphate (cPMP). This is Cyclic pyranopterin monophosphate synthase from Thermomicrobium roseum (strain ATCC 27502 / DSM 5159 / P-2).